Here is a 415-residue protein sequence, read N- to C-terminus: Nacrein-like protein F (415 aa).

N-linked (GlcNAc...) asparagine glycosylation occurs at Asn27. The 382-residue stretch at 33–414 folds into the Alpha-carbonic anhydrase domain; sequence AGFSYDRSIC…KNKVTVYKSF (382 aa). Residues His132, His134, and His157 each contribute to the Zn(2+) site. The segment at 201 to 297 is disordered; the sequence is DEPDDEECKH…GENGHKHGCR (97 aa). Residues 207-219 show a composition bias toward basic and acidic residues; it reads ECKHILKGHHPDN. Residues 220–289 show a composition bias toward low complexity; that stretch reads NENGNGDNGN…NNGENGNNGE (70 aa). 22 consecutive repeat copies span residues 225 to 227, 228 to 230, 231 to 233, 234 to 236, 237 to 239, 240 to 242, 243 to 245, 246 to 248, 249 to 251, 252 to 254, 255 to 257, 258 to 260, 261 to 263, 264 to 266, 267 to 269, 270 to 272, 273 to 275, 276 to 278, 279 to 281, 282 to 284, 285 to 286, and 288 to 290. The 22 X 3 AA approximate tandem repeats of G-X-N stretch occupies residues 225 to 290; that stretch reads GDNGNNGYNG…NGENGNNGEN (66 aa). 355 to 356 is a binding site for substrate; sequence TT.

The protein belongs to the alpha-carbonic anhydrase family. In terms of assembly, homooligomer; disulfide-linked. May also be disulfide-linked to insoluble organic matrix. The cofactor is Zn(2+). Expressed in the mantle.

It is found in the secreted. The protein resides in the extracellular space. The protein localises to the extracellular matrix. It catalyses the reaction hydrogencarbonate + H(+) = CO2 + H2O. Its function is as follows. Acts as a negative regulator for calcification in the shells of mollusks. May function both as a calcium concentrator and as a carbonic anhydrase required for production of carbonate ions, which are assembled to CaCO(3) at mineralization sites. Is important for shell formation in both the calcitic prismatic layer and the aragonitic nacreous layer. Shows inhibitory activity of crystal formation when present in free state but, when attached to the insoluble matrix, may regulate the form and size of aragonite crystal. The sequence is that of Nacrein-like protein F from Pinctada fucata (Akoya pearl oyster).